Reading from the N-terminus, the 395-residue chain is Tyrosine--tRNA ligase 2 (395 aa).

Residues 42-51 (PTAPDIHLGH) carry the 'HIGH' region motif. The short motif at 226–230 (KMSKS) is the 'KMSKS' region element. Lys-229 contacts ATP. In terms of domain architecture, S4 RNA-binding spans 334-394 (TPVANLLKDA…GKRKFARITI (61 aa)).

Belongs to the class-I aminoacyl-tRNA synthetase family. TyrS type 2 subfamily. In terms of assembly, homodimer.

The protein resides in the cytoplasm. It catalyses the reaction tRNA(Tyr) + L-tyrosine + ATP = L-tyrosyl-tRNA(Tyr) + AMP + diphosphate + H(+). In terms of biological role, catalyzes the attachment of tyrosine to tRNA(Tyr) in a two-step reaction: tyrosine is first activated by ATP to form Tyr-AMP and then transferred to the acceptor end of tRNA(Tyr). The sequence is that of Tyrosine--tRNA ligase 2 from Vibrio parahaemolyticus serotype O3:K6 (strain RIMD 2210633).